Consider the following 415-residue polypeptide: Interleukin-5 receptor subunit alpha (415 aa).

Residues Met-1–Ala-17 form the signal peptide. The Extracellular segment spans residues Asp-18–His-339. Residues Pro-29–Gly-120 enclose the Fibronectin type-III 1 domain. Asn-32 and Asn-128 each carry an N-linked (GlcNAc...) asparagine glycan. 2 cysteine pairs are disulfide-bonded: Cys-131–Cys-152 and Cys-179–Cys-193. N-linked (GlcNAc...) asparagine glycosylation is found at Asn-213 and Asn-241. The Fibronectin type-III 2 domain occupies Pro-238–Glu-331. A disulfide bridge connects residues Cys-266 and Cys-313. Residues Trp-319–Ser-323 carry the WSXWS motif motif. The helical transmembrane segment at Leu-340 to Cys-361 threads the bilayer. Over His-362–Phe-415 the chain is Cytoplasmic. A Box 1 motif motif is present at residues Leu-367 to Lys-375.

In terms of assembly, interacts with IL5. Interacts with CSF2RB. Interacts with JAK2. Interacts with SDCBP. Expressed on eosinophils and basophils. Also on B-cells.

Its subcellular location is the membrane. In terms of biological role, cell surface receptor that plays an important role in the survival, differentiation, and chemotaxis of eosinophils. Acts by forming a heterodimeric receptor with CSF2RB subunit and subsequently binding to interleukin-5. In unstimulated conditions, interacts constitutively with JAK2. Heterodimeric receptor activation leads to JAK2 stimulation and subsequent activation of the JAK-STAT pathway. The protein is Interleukin-5 receptor subunit alpha (Il5ra) of Mus musculus (Mouse).